A 226-amino-acid chain; its full sequence is Thiamine-phosphate synthase (226 aa).

Residues 46-50 and D83 contribute to the 4-amino-2-methyl-5-(diphosphooxymethyl)pyrimidine site; that span reads QFRDK. Residues D84 and D103 each contribute to the Mg(2+) site. S122 is a 4-amino-2-methyl-5-(diphosphooxymethyl)pyrimidine binding site. 2-[(2R,5Z)-2-carboxy-4-methylthiazol-5(2H)-ylidene]ethyl phosphate is bound at residue 149-151; it reads TQS. K152 is a binding site for 4-amino-2-methyl-5-(diphosphooxymethyl)pyrimidine. 2-[(2R,5Z)-2-carboxy-4-methylthiazol-5(2H)-ylidene]ethyl phosphate-binding positions include G181 and 201–202; that span reads IT.

This sequence belongs to the thiamine-phosphate synthase family. Requires Mg(2+) as cofactor.

It carries out the reaction 2-[(2R,5Z)-2-carboxy-4-methylthiazol-5(2H)-ylidene]ethyl phosphate + 4-amino-2-methyl-5-(diphosphooxymethyl)pyrimidine + 2 H(+) = thiamine phosphate + CO2 + diphosphate. It catalyses the reaction 2-(2-carboxy-4-methylthiazol-5-yl)ethyl phosphate + 4-amino-2-methyl-5-(diphosphooxymethyl)pyrimidine + 2 H(+) = thiamine phosphate + CO2 + diphosphate. The enzyme catalyses 4-methyl-5-(2-phosphooxyethyl)-thiazole + 4-amino-2-methyl-5-(diphosphooxymethyl)pyrimidine + H(+) = thiamine phosphate + diphosphate. Its pathway is cofactor biosynthesis; thiamine diphosphate biosynthesis; thiamine phosphate from 4-amino-2-methyl-5-diphosphomethylpyrimidine and 4-methyl-5-(2-phosphoethyl)-thiazole: step 1/1. In terms of biological role, condenses 4-methyl-5-(beta-hydroxyethyl)thiazole monophosphate (THZ-P) and 2-methyl-4-amino-5-hydroxymethyl pyrimidine pyrophosphate (HMP-PP) to form thiamine monophosphate (TMP). In Haemophilus influenzae (strain 86-028NP), this protein is Thiamine-phosphate synthase.